The following is a 287-amino-acid chain: MAVGKEIKTKIASVKNTQKITSAMEMVAASKMRKAQEGMAASRPYATNIRNVIGHIALGNLEYRHPYMEERETKRVGYIVVSTDRGLCGGLNINLFKKVLADAAEKQASGAEVEFGVVGSKATSFFNNMGAKVSAQISGLGDSPSLTDLVGSVAVMLKAYDNGEIDKLYVVYNKFVNTMTQDATIDQLLPLPKSDDEEISHRWDYIYEPDANSLLDKLLVRYIESQVYQGVVENIACEQAARMVAMKAATDNAGDLIDDLQLVYNKARQAAITQELGEIVAGAAAVG.

Belongs to the ATPase gamma chain family. F-type ATPases have 2 components, CF(1) - the catalytic core - and CF(0) - the membrane proton channel. CF(1) has five subunits: alpha(3), beta(3), gamma(1), delta(1), epsilon(1). CF(0) has three main subunits: a, b and c.

The protein localises to the cell inner membrane. In terms of biological role, produces ATP from ADP in the presence of a proton gradient across the membrane. The gamma chain is believed to be important in regulating ATPase activity and the flow of protons through the CF(0) complex. In Colwellia psychrerythraea (strain 34H / ATCC BAA-681) (Vibrio psychroerythus), this protein is ATP synthase gamma chain.